Consider the following 218-residue polypeptide: MTQDEMKKAAGWAALKYVEKGSIVGVGTGSTVNHFIDALGSIKDDIKGAVSSSVASTERLKELGIEVYECNDVAMLDIYVDGADEINAAREMIKGGGAALTREKIVAAISEKFVCIVDGTKAVDVLGQFPLPVEVIPMARSYVARELVKLGGDPAYREGVTTDNGNVILDVHNMQITNPKELEDKINGIAGVVTVGLFAHRGADVVITGTPEGAKIEE.

Residues 28 to 31, 81 to 84, and 94 to 97 contribute to the substrate site; these read TGST, DGAD, and KGGG. Glu103 functions as the Proton acceptor in the catalytic mechanism. Position 121 (Lys121) interacts with substrate.

The protein belongs to the ribose 5-phosphate isomerase family. In terms of assembly, homodimer.

It carries out the reaction aldehydo-D-ribose 5-phosphate = D-ribulose 5-phosphate. The protein operates within carbohydrate degradation; pentose phosphate pathway; D-ribose 5-phosphate from D-ribulose 5-phosphate (non-oxidative stage): step 1/1. Catalyzes the reversible conversion of ribose-5-phosphate to ribulose 5-phosphate. The polypeptide is Ribose-5-phosphate isomerase A (Vibrio campbellii (strain ATCC BAA-1116)).